Consider the following 327-residue polypeptide: Transcription factor bHLH71 (327 aa).

Disordered stretches follow at residues 46–88 and 151–176; these read ISEI…NQRM and AKLN…HQPS. Over residues 65-76 the composition is skewed to basic residues; that stretch reads RGKKRRRRKPRV. The span at 77-88 shows a compositional bias: basic and acidic residues; the sequence is CKNEEEAENQRM. One can recognise a bHLH domain in the interval 85–136; that stretch reads NQRMTHIAVERNRRRQMNQHLSVLRSLMPQPFAHKGDQASIVGGAIDFIKEL. Residues 152-169 are compositionally biased toward polar residues; the sequence is KLNQSVTSSTSQDSNGEQ.

As to quaternary structure, homodimer. Interacts with FAMA. Expressed in leaves, stems, and flowers.

Its subcellular location is the nucleus. In terms of biological role, transcription factor. May be involved in the differentiation of stomatal guard cells. The chain is Transcription factor bHLH71 (BHLH71) from Arabidopsis thaliana (Mouse-ear cress).